The chain runs to 100 residues: NADH-quinone oxidoreductase subunit K 1 (100 aa).

3 consecutive transmembrane segments (helical) span residues 4 to 24 (LHSY…GVLV), 29 to 49 (IVIF…FIAL), and 60 to 80 (IFVF…LALM).

Belongs to the complex I subunit 4L family. In terms of assembly, NDH-1 is composed of 14 different subunits. Subunits NuoA, H, J, K, L, M, N constitute the membrane sector of the complex.

It is found in the cell inner membrane. It catalyses the reaction a quinone + NADH + 5 H(+)(in) = a quinol + NAD(+) + 4 H(+)(out). In terms of biological role, NDH-1 shuttles electrons from NADH, via FMN and iron-sulfur (Fe-S) centers, to quinones in the respiratory chain. The immediate electron acceptor for the enzyme in this species is believed to be ubiquinone. Couples the redox reaction to proton translocation (for every two electrons transferred, four hydrogen ions are translocated across the cytoplasmic membrane), and thus conserves the redox energy in a proton gradient. This chain is NADH-quinone oxidoreductase subunit K 1, found in Geobacter sulfurreducens (strain ATCC 51573 / DSM 12127 / PCA).